A 1788-amino-acid chain; its full sequence is Glutamine and serine-rich protein 1 (1788 aa).

The span at 1–53 shows a compositional bias: low complexity; the sequence is MDAHYAPAGFAEPPAPPASAATQPAAPAWAYEARVPAAASSPSCSGSSPSLKA. Disordered regions lie at residues 1–69, 472–498, and 532–617; these read MDAH…DVLQ, TRDLPSVSESQNYSSGQSQGLSPVSQT, and SYSS…SKQD. Composition is skewed to polar residues over residues 60 to 69, 478 to 492, 532 to 569, and 576 to 594; these read PSQSESDVLQ, VSESQNYSSGQSQGL, SYSSASRGQSLPVSTPTPSYTSMHPSPNAQTQGSSAQP, and VQSSFASSTRGQTLQSSIP. A phosphoserine mark is found at Ser670 and Ser940. Residue Thr1003 is modified to Phosphothreonine. At Ser1041 the chain carries Phosphoserine. Disordered regions lie at residues 1104–1163 and 1234–1264; these read QPGD…TDVY and IQTTRTFCPPPFAKTSPAAQAPSETGGVSLS. Lys1112 is covalently cross-linked (Glycyl lysine isopeptide (Lys-Gly) (interchain with G-Cter in SUMO2)). Residues 1126–1136 show a composition bias toward basic and acidic residues; sequence PKEKAKGKEQG. Lys1137 is covalently cross-linked (Glycyl lysine isopeptide (Lys-Gly) (interchain with G-Cter in SUMO2)). Phosphoserine occurs at positions 1262, 1281, and 1282. Phosphothreonine is present on Thr1394. Phosphoserine is present on Ser1401. Residues 1494–1588 form a disordered region; it reads VCSKKPRNKP…DEGFEPPAPS (95 aa). Low complexity predominate over residues 1510 to 1537; that stretch reads IPSKPSSISKTSDPPVSKTTTTKTPSTK. The span at 1545–1561 shows a compositional bias: basic and acidic residues; it reads IKAEPPPKKRKKWKEEF. A compositionally biased stretch (low complexity) spans 1562–1575; sequence SSSQSESSPEVRSS.

In terms of assembly, interacts with TET1.

It localises to the chromosome. Its function is as follows. Plays an essential role in the protection and maintenance of transcriptional and developmental programs. Protects many bivalent promoters and poised enhancers from hypermethylation, showing a marked preference for these regulatory elements over other types of promoters or enhancers. Mechanistically, cooperates with TET1 and binds to DNA in a common complex to inhibit the binding of DNMT3A/3B and therefore de novo methylation. The sequence is that of Glutamine and serine-rich protein 1 from Mus musculus (Mouse).